The following is a 671-amino-acid chain: DNA ligase (671 aa).

NAD(+) contacts are provided by residues 32–36 (DAEYD), 81–82 (SL), and E113. K115 (N6-AMP-lysine intermediate) is an active-site residue. NAD(+)-binding residues include R136, E173, K290, and K314. Zn(2+) contacts are provided by C408, C411, C426, and C432. The 79-residue stretch at 593 to 671 (EIDSPFAGKT…EAEMIRLLGA (79 aa)) folds into the BRCT domain.

The protein belongs to the NAD-dependent DNA ligase family. LigA subfamily. Requires Mg(2+) as cofactor. It depends on Mn(2+) as a cofactor.

The enzyme catalyses NAD(+) + (deoxyribonucleotide)n-3'-hydroxyl + 5'-phospho-(deoxyribonucleotide)m = (deoxyribonucleotide)n+m + AMP + beta-nicotinamide D-nucleotide.. Its function is as follows. DNA ligase that catalyzes the formation of phosphodiester linkages between 5'-phosphoryl and 3'-hydroxyl groups in double-stranded DNA using NAD as a coenzyme and as the energy source for the reaction. It is essential for DNA replication and repair of damaged DNA. In Salmonella gallinarum (strain 287/91 / NCTC 13346), this protein is DNA ligase.